A 124-amino-acid polypeptide reads, in one-letter code: Fluoride-specific ion channel FluC (124 aa).

Helical transmembrane passes span 4-24, 35-55, 62-82, and 102-122; these read LIFVALGGSIGAVFRYLISIF, FGTLMVNVIGSFLMGVIYALG, PEIKALVGVGLLGALTTFSTF, and IALNLCLCLFMVYLGQQLVFS. Na(+) contacts are provided by Gly-74 and Thr-77.

This sequence belongs to the fluoride channel Fluc/FEX (TC 1.A.43) family.

Its subcellular location is the cell inner membrane. It carries out the reaction fluoride(in) = fluoride(out). Na(+) is not transported, but it plays an essential structural role and its presence is essential for fluoride channel function. Fluoride-specific ion channel. Important for reducing fluoride concentration in the cell, thus reducing its toxicity. This is Fluoride-specific ion channel FluC from Shewanella loihica (strain ATCC BAA-1088 / PV-4).